The sequence spans 200 residues: Probable UbiX-like flavin prenyltransferase (200 aa).

Residues 9–11 (GAT), serine 36, 87–90 (SMKT), and arginine 122 each bind FMN.

It belongs to the UbiX/PAD1 family. YclB subfamily. Homododecamer.

It catalyses the reaction dimethylallyl phosphate + FMNH2 = prenylated FMNH2 + phosphate. Functionally, involved in the non-oxidative decarboxylation and detoxification of phenolic derivatives under both aerobic and anaerobic conditions. Flavin prenyltransferase that catalyzes the synthesis of the prenylated FMN cofactor (prenyl-FMN) for phenolic acid decarboxylase. The protein is Probable UbiX-like flavin prenyltransferase of Streptomyces sp. (strain D7).